A 717-amino-acid chain; its full sequence is Proline-rich receptor-like protein kinase PERK2 (717 aa).

Residues 1 to 197 (MSSAPPPGGT…GSLSPPPPAS (197 aa)) show a composition bias toward pro residues. The disordered stretch occupies residues 1–221 (MSSAPPPGGT…GSSPPAQSSK (221 aa)). Topologically, residues 1-228 (MSSAPPPGGT…SSKELSKGAM (228 aa)) are extracellular. A compositionally biased stretch (low complexity) spans 198–220 (PSGGRSPSTPSTTPGSSPPAQSS). The chain crosses the membrane as a helical span at residues 229–249 (VGIAIGGGFVLLVALALIFFL). Residues 250–717 (CKKKRRRDNE…NIKRPGQGYG (468 aa)) lie on the Cytoplasmic side of the membrane. Residues 258-323 (NEAPPAPIDG…YDSNYSDQSV (66 aa)) form a disordered region. Residues 289–303 (VPPPKSPSSAPPRPP) are compositionally biased toward pro residues. Positions 307–322 (SSGSSGDYDSNYSDQS) are enriched in low complexity. The Protein kinase domain maps to 354 to 631 (FSEANLLGQG…QVARVLEGNI (278 aa)). ATP contacts are provided by residues 360–368 (LGQGGFGYV) and Lys-382. Asp-478 functions as the Proton acceptor in the catalytic mechanism. Polar residues-rich tracts occupy residues 632–644 (SPSD…TPGH) and 692–705 (SWSS…QGKA). 2 disordered regions span residues 632–665 (SPSD…DNEG) and 690–717 (YPSW…QGYG).

Belongs to the protein kinase superfamily. Ser/Thr protein kinase family. Mostly expressed in inflorescence bolt, flower buds and siliques, and, to a lower extent, in roots, seedlings and leaves.

It localises to the cell membrane. It catalyses the reaction L-seryl-[protein] + ATP = O-phospho-L-seryl-[protein] + ADP + H(+). It carries out the reaction L-threonyl-[protein] + ATP = O-phospho-L-threonyl-[protein] + ADP + H(+). The polypeptide is Proline-rich receptor-like protein kinase PERK2 (PERK2) (Arabidopsis thaliana (Mouse-ear cress)).